Here is a 309-residue protein sequence, read N- to C-terminus: RING finger protein mug145 (309 aa).

Residues Ile23–Tyr43 traverse the membrane as a helical segment. Residues Cys205–Asn247 form an RING-type; atypical zinc finger.

The protein localises to the membrane. Functionally, has a role in meiosis. The polypeptide is RING finger protein mug145 (mug145) (Schizosaccharomyces pombe (strain 972 / ATCC 24843) (Fission yeast)).